A 228-amino-acid polypeptide reads, in one-letter code: Non-specific lipid-transfer protein EPAD1 (228 aa).

An N-terminal signal peptide occupies residues 1 to 24; it reads MERSHLAVLLGLLAFAAGVPAAAA. Disulfide bonds link cysteine 40-cysteine 62, cysteine 63-cysteine 105, and cysteine 78-cysteine 119. Asparagine 94 is a glycosylation site (N-linked (GlcNAc...) asparagine). The segment at 124–207 is disordered; sequence PPASIVTAPP…PPRSGASSSL (84 aa). Positions 145-162 are enriched in pro residues; sequence REAPPPPPAAEKLSPPPQ.

This sequence belongs to the plant LTP family. In terms of tissue distribution, expressed in young panicles. Specifically expressed in pollen mother cells and young microspores.

The protein localises to the cell membrane. Plant non-specific lipid-transfer protein that binds phospholipids in vitro. Required for correct pollen exine patterning by controlling the continuity and homogeneity of the primexine distribution. This Oryza sativa subsp. japonica (Rice) protein is Non-specific lipid-transfer protein EPAD1.